Here is a 154-residue protein sequence, read N- to C-terminus: Large ribosomal subunit protein uL22 (154 aa).

The protein belongs to the universal ribosomal protein uL22 family. As to quaternary structure, part of the 50S ribosomal subunit.

In terms of biological role, this protein binds specifically to 23S rRNA. It makes multiple contacts with different domains of the 23S rRNA in the assembled 50S subunit and ribosome. Its function is as follows. The globular domain of the protein is located near the polypeptide exit tunnel on the outside of the subunit, while an extended beta-hairpin is found that lines the wall of the exit tunnel in the center of the 70S ribosome. The chain is Large ribosomal subunit protein uL22 from Methanosphaera stadtmanae (strain ATCC 43021 / DSM 3091 / JCM 11832 / MCB-3).